The following is a 377-amino-acid chain: tRNA-splicing endonuclease subunit SEN2 (377 aa).

The stretch at 119 to 174 (ETEMTLEKVTQQRRLQRLEFKKERAKLERELLELRKKGGHIDEENILLEKQRESLR) forms a coiled coil. Catalysis depends on residues tyrosine 289, histidine 297, and lysine 328.

It belongs to the tRNA-intron endonuclease family. Heterotetramer composed of SEN2, SEN15, SEN34 and SEN54. Interacts directly with SEN54.

It is found in the nucleus. The protein localises to the endomembrane system. Its subcellular location is the mitochondrion outer membrane. The catalysed reaction is pretRNA = a 3'-half-tRNA molecule with a 5'-OH end + a 5'-half-tRNA molecule with a 2',3'-cyclic phosphate end + an intron with a 2',3'-cyclic phosphate and a 5'-hydroxyl terminus.. Constitutes one of the two catalytic subunit of the tRNA-splicing endonuclease complex, a complex responsible for identification and cleavage of the splice sites in pre-tRNA. It cleaves pre-tRNA at the 5'- and 3'-splice sites to release the intron. The products are an intron and two tRNA half-molecules bearing 2',3'-cyclic phosphate and 5'-OH termini. There are no conserved sequences at the splice sites, but the intron is invariably located at the same site in the gene, placing the splice sites an invariant distance from the constant structural features of the tRNA body. This subunit may anchor the endonuclease complex to the nuclear membrane. Probably carries the active site for 5'-splice site cleavage. This chain is tRNA-splicing endonuclease subunit SEN2 (SEN2), found in Saccharomyces cerevisiae (strain ATCC 204508 / S288c) (Baker's yeast).